We begin with the raw amino-acid sequence, 212 residues long: Large ribosomal subunit protein bL25 (212 aa).

Residues 1 to 25 (MSQSTIHKIAVKKRTETGKNENNRL) are disordered. Basic and acidic residues predominate over residues 13–24 (KRTETGKNENNR).

The protein belongs to the bacterial ribosomal protein bL25 family. CTC subfamily. Part of the 50S ribosomal subunit; part of the 5S rRNA/L5/L18/L25 subcomplex. Contacts the 5S rRNA. Binds to the 5S rRNA independently of L5 and L18.

Its function is as follows. This is one of the proteins that binds to the 5S RNA in the ribosome where it forms part of the central protuberance. The chain is Large ribosomal subunit protein bL25 from Leptospira borgpetersenii serovar Hardjo-bovis (strain JB197).